The sequence spans 121 residues: Large ribosomal subunit protein uL14c (121 aa).

The protein belongs to the universal ribosomal protein uL14 family. As to quaternary structure, part of the 50S ribosomal subunit.

It localises to the plastid. Its subcellular location is the organellar chromatophore. Binds to 23S rRNA. This Paulinella chromatophora protein is Large ribosomal subunit protein uL14c.